Here is a 706-residue protein sequence, read N- to C-terminus: Elongation factor G (706 aa).

A tr-type G domain is found at 8–297; it reads SYVRNIGIGA…AVVDYLPSPN (290 aa). GTP is bound by residues 17 to 24, 95 to 99, and 149 to 152; these read AHIDAGKT, DTPGH, and NKMD.

It belongs to the TRAFAC class translation factor GTPase superfamily. Classic translation factor GTPase family. EF-G/EF-2 subfamily.

It is found in the cytoplasm. Its function is as follows. Catalyzes the GTP-dependent ribosomal translocation step during translation elongation. During this step, the ribosome changes from the pre-translocational (PRE) to the post-translocational (POST) state as the newly formed A-site-bound peptidyl-tRNA and P-site-bound deacylated tRNA move to the P and E sites, respectively. Catalyzes the coordinated movement of the two tRNA molecules, the mRNA and conformational changes in the ribosome. In Orientia tsutsugamushi (strain Ikeda) (Rickettsia tsutsugamushi), this protein is Elongation factor G.